A 300-amino-acid polypeptide reads, in one-letter code: Ecto-ADP-ribosyltransferase 4 (300 aa).

The first 23 residues, 1 to 23 (MALWLPGGQLTLLLLLWVQQTPA), serve as a signal peptide directing secretion. The Extracellular portion of the chain corresponds to 24 to 269 (GSTEAPLKVD…QLLKACSKKC (246 aa)). 2 disulfide bridges follow: cysteine 48–cysteine 259 and cysteine 161–cysteine 210. Residues 70–255 (KYYSRAWQKA…INLRSAGNMS (186 aa)) enclose the TR mART core domain. Residues asparagine 110 and asparagine 157 are each glycosylated (N-linked (GlcNAc...) asparagine). Glutamine 185 contacts NAD(+). A glycan (N-linked (GlcNAc...) asparagine) is linked at asparagine 201. Serine 219 contacts NAD(+). A glycan (N-linked (GlcNAc...) asparagine) is linked at asparagine 253. Alanine 264 is lipidated: GPI-anchor amidated alanine. A propeptide spans 265-300 (CSKKCAPAPVVIGCLFLVTVVISSKSRAQRNLLAPF) (removed in mature form). The helical transmembrane segment at 270–286 (APAPVVIGCLFLVTVVI) threads the bilayer. At 287–300 (SSKSRAQRNLLAPF) the chain is on the cytoplasmic side.

The protein belongs to the Arg-specific ADP-ribosyltransferase family.

The protein resides in the membrane. It localises to the cell membrane. The enzyme catalyses L-arginyl-[protein] + NAD(+) = N(omega)-(ADP-D-ribosyl)-L-arginyl-[protein] + nicotinamide + H(+). The sequence is that of Ecto-ADP-ribosyltransferase 4 (Art4) from Mus musculus (Mouse).